Here is a 137-residue protein sequence, read N- to C-terminus: Small ribosomal subunit protein bS6 (137 aa).

Belongs to the bacterial ribosomal protein bS6 family.

Functionally, binds together with bS18 to 16S ribosomal RNA. This is Small ribosomal subunit protein bS6 from Sulfurimonas denitrificans (strain ATCC 33889 / DSM 1251) (Thiomicrospira denitrificans (strain ATCC 33889 / DSM 1251)).